Consider the following 278-residue polypeptide: Potassium/proton antiporter CemA (278 aa).

4 helical membrane passes run 61 to 81 (ILLL…FVFG), 155 to 175 (AVKN…LMIT), 203 to 223 (IILF…EVII), and 238 to 258 (FIFL…KYWI).

It belongs to the CemA family.

The protein resides in the plastid. It is found in the chloroplast inner membrane. It carries out the reaction K(+)(in) + H(+)(out) = K(+)(out) + H(+)(in). Functionally, contributes to K(+)/H(+) antiport activity by supporting proton efflux to control proton extrusion and homeostasis in chloroplasts in a light-dependent manner to modulate photosynthesis. Prevents excessive induction of non-photochemical quenching (NPQ) under continuous-light conditions. Indirectly promotes efficient inorganic carbon uptake into chloroplasts. The sequence is that of Potassium/proton antiporter CemA from Pyropia yezoensis (Susabi-nori).